Consider the following 270-residue polypeptide: Tetraspanin-17 (270 aa).

At 1 to 19 (MPGKHQHFQEPEVGCCGKY) the chain is on the cytoplasmic side. The chain crosses the membrane as a helical span at residues 20–40 (FLFGFNIVFWVLGALFLAIGL). Topologically, residues 41-63 (WAWGEKGVLSNISALTDLGGLDP) are extracellular. A glycan (N-linked (GlcNAc...) asparagine) is linked at Asn51. Residues 64-84 (VWLFVVVGGVMSVLGFAGCIG) form a helical membrane-spanning segment. The Cytoplasmic segment spans residues 85–94 (ALRENTFLLK). Residues 95–115 (FFSVFLGLIFFLELATGILAF) traverse the membrane as a helical segment. At 116–234 (VFKDWIRDQL…GQFEKWLQDN (119 aa)) the chain is on the extracellular side. 4 cysteine pairs are disulfide-bonded: Cys155–Cys223, Cys156–Cys188, Cys172–Cys182, and Cys189–Cys202. Asn171 carries an N-linked (GlcNAc...) asparagine glycan. The chain crosses the membrane as a helical span at residues 235–255 (LIVVAGVFMGIALLQIFGICL). Residues 256 to 270 (AQNLVSDIKAVKANW) lie on the Cytoplasmic side of the membrane.

This sequence belongs to the tetraspanin (TM4SF) family. In terms of assembly, interacts with ADAM10; the interaction influences ADAM10 substrate specificity, endocytosis and turnover.

The protein resides in the cell membrane. Part of TspanC8 subgroup, composed of 6 members that interact with the transmembrane metalloprotease ADAM10. This interaction is required for ADAM10 exit from the endoplasmic reticulum and for enzymatic maturation and trafficking to the cell surface as well as substrate specificity. Different TspanC8/ADAM10 complexes have distinct substrates. Seems to regulate VE-cadherin expression in endothelial cells probably through interaction with ADAM10, promoting leukocyte transmigration. This is Tetraspanin-17 from Homo sapiens (Human).